Here is a 352-residue protein sequence, read N- to C-terminus: C-C chemokine receptor type 5 (352 aa).

Residues 1–30 (MDYQVSSPTYDIDYNTSEPCQKINVKQIAA) lie on the Extracellular side of the membrane. Tyrosine 3 carries the sulfotyrosine modification. Serine 6 and serine 7 each carry an O-linked (GalNAc...) serine glycan. 2 positions are modified to sulfotyrosine: tyrosine 10 and tyrosine 14. 2 disulfides stabilise this stretch: cysteine 20–cysteine 269 and cysteine 101–cysteine 178. Residues 31–58 (RLLPLLYSLVFIFGFVGNILVVLILINC) form a helical membrane-spanning segment. At 59–68 (KRLKSMTDIY) the chain is on the cytoplasmic side. Residues 69-89 (LLNLAISDLLFLLTVPFWAHY) form a helical membrane-spanning segment. Residues 90 to 102 (AAAQWDFGNTMCQ) lie on the Extracellular side of the membrane. A helical transmembrane segment spans residues 103–124 (LLTGLYFIGFFSGIFFIILLTI). The Cytoplasmic portion of the chain corresponds to 125–141 (DRYLAIVHAVFALKART). Residues 142–166 (VTFGVVTSVITWVVAVFASLPRIIF) traverse the membrane as a helical segment. Topologically, residues 167–198 (TRSQREGLHYTCSSHFPYSQYQFWKNFQTLKI) are extracellular. Residues 199 to 218 (VILGLVLPLLVMVICYSGIL) traverse the membrane as a helical segment. Residues 219–235 (KTLLRCRNEKKRHRAVR) are Cytoplasmic-facing. Residues 236–260 (LIFTIMIVYFLFWAPYNIVLLLNTF) form a helical membrane-spanning segment. Over 261–277 (QEFFGLNNCSSSNRLDQ) the chain is Extracellular. The helical transmembrane segment at 278–301 (AMQVTETLGMTHCCINPIIYAFVG) threads the bilayer. Over 302–352 (EKFRNYLLVFFQKHIAKRFCKCCSIFQQEAPERASSVYTRSTGEQEISVGL) the chain is Cytoplasmic. Residues cysteine 321, cysteine 323, and cysteine 324 are each lipidated (S-palmitoyl cysteine). A phosphoserine; by BARK1 mark is found at serine 336, serine 337, serine 342, and serine 349.

Belongs to the G-protein coupled receptor 1 family. In terms of assembly, interacts with PRAF2. Efficient ligand binding to CCL3/MIP-1alpha and CCL4/MIP-1beta requires sulfation, O-glycosylation and sialic acid modifications. Glycosylation on Ser-6 is required for efficient binding of CCL4. Interacts with GRK2. Interacts with ARRB1 and ARRB2. Interacts with CNIH4. Interacts with S100A4; this interaction stimulates T-lymphocyte chemotaxis. Sulfated on at least 2 of the N-terminal tyrosines. Sulfation is required for efficient binding of the chemokines, CCL3 and CCL4. Post-translationally, palmitoylation in the C-terminal is important for cell surface expression. In terms of processing, phosphorylation on serine residues in the C-terminal is stimulated by binding CC chemokines especially by APO-RANTES. O-glycosylated, but not N-glycosylated. Ser-6 appears to be the major site even if Ser-7 may be also O-glycosylated. Also sialylated glycans present which contribute to chemokine binding. Thr-16 and Ser-17 may also be glycosylated and, if so, with small moieties such as a T-antigen.

It is found in the cell membrane. Its function is as follows. Receptor for a number of inflammatory CC-chemokines including CCL3/MIP-1-alpha, CCL4/MIP-1-beta and RANTES and subsequently transduces a signal by increasing the intracellular calcium ion level. May play a role in the control of granulocytic lineage proliferation or differentiation. Participates in T-lymphocyte migration to the infection site by acting as a chemotactic receptor. The sequence is that of C-C chemokine receptor type 5 (CCR5) from Cercopithecus cephus (Moustached monkey).